A 722-amino-acid polypeptide reads, in one-letter code: Polyribonucleotide nucleotidyltransferase (722 aa).

Mg(2+) is bound by residues D487 and D493. The 60-residue stretch at 554–613 (PRIETFKIPTDKIREVIGTGGKVIREIVEKTGAKVNIEDDGTVKVASSDGESIKAAIKWI) folds into the KH domain. Residues 623–691 (GEIYEGTVVK…DRGKTRLSMK (69 aa)) form the S1 motif domain. Residues 697–722 (TGEDLEAKQKAEAKAEGEAPAQAAGE) form a disordered region. The segment covering 701–713 (LEAKQKAEAKAEG) has biased composition (basic and acidic residues).

Belongs to the polyribonucleotide nucleotidyltransferase family. Requires Mg(2+) as cofactor.

Its subcellular location is the cytoplasm. The catalysed reaction is RNA(n+1) + phosphate = RNA(n) + a ribonucleoside 5'-diphosphate. Functionally, involved in mRNA degradation. Catalyzes the phosphorolysis of single-stranded polyribonucleotides processively in the 3'- to 5'-direction. In Rhodopseudomonas palustris (strain ATCC BAA-98 / CGA009), this protein is Polyribonucleotide nucleotidyltransferase.